The primary structure comprises 368 residues: Alanine racemase (368 aa).

Catalysis depends on Lys40, which acts as the Proton acceptor; specific for D-alanine. Residue Lys40 is modified to N6-(pyridoxal phosphate)lysine. Arg136 is a binding site for substrate. The Proton acceptor; specific for L-alanine role is filled by Tyr263. Met310 provides a ligand contact to substrate.

It belongs to the alanine racemase family. It depends on pyridoxal 5'-phosphate as a cofactor.

It carries out the reaction L-alanine = D-alanine. It functions in the pathway amino-acid biosynthesis; D-alanine biosynthesis; D-alanine from L-alanine: step 1/1. Catalyzes the interconversion of L-alanine and D-alanine. May also act on other amino acids. The sequence is that of Alanine racemase (alr) from Streptococcus uberis (strain ATCC BAA-854 / 0140J).